The primary structure comprises 541 residues: Calcium-dependent protein kinase 9 (541 aa).

The interval 1-75 (MGNCFAKNHG…PGLSPKTTTK (75 aa)) is disordered. Glycine 2 carries N-myristoyl glycine lipidation. Polar residues predominate over residues 14-54 (PQQNGNTTRSVEVGVTNQDPPSYTPQARTTQQPEKPGSVNS). Serine 69 is subject to Phosphoserine. The Protein kinase domain maps to 91–349 (YTLGKELGRG…AADVLQHPWL (259 aa)). Residues 97–105 (LGRGQFGVT) and lysine 120 contribute to the ATP site. Aspartate 215 (proton acceptor) is an active-site residue. Serine 255 is modified (phosphoserine). The interval 355–385 (ASDKPIDSAVLSRMKQFRAMNKLKKLALKVI) is autoinhibitory domain. EF-hand domains follow at residues 392–427 (EEIQ…LGSK), 428–463 (LTEA…RHRL), 464–499 (ESNE…YGMG), and 500–534 (DDAT…GNPQ). Residues aspartate 405, aspartate 407, serine 409, threonine 411, glutamate 416, aspartate 441, aspartate 443, asparagine 445, serine 447, glutamate 452, aspartate 477, aspartate 479, serine 481, tyrosine 483, glutamate 488, aspartate 512, aspartate 514, aspartate 516, arginine 518, and glutamate 523 each coordinate Ca(2+).

Belongs to the protein kinase superfamily. Ser/Thr protein kinase family. CDPK subfamily.

Its subcellular location is the cell membrane. The catalysed reaction is L-seryl-[protein] + ATP = O-phospho-L-seryl-[protein] + ADP + H(+). The enzyme catalyses L-threonyl-[protein] + ATP = O-phospho-L-threonyl-[protein] + ADP + H(+). Its activity is regulated as follows. Activated by calcium. Autophosphorylation may play an important role in the regulation of the kinase activity. May play a role in signal transduction pathways that involve calcium as a second messenger. The polypeptide is Calcium-dependent protein kinase 9 (CPK9) (Arabidopsis thaliana (Mouse-ear cress)).